Reading from the N-terminus, the 347-residue chain is D-alanine--D-alanine ligase (347 aa).

Residues 138–339 (KILCSHAGIP…YSQVIETILA (202 aa)) enclose the ATP-grasp domain. 171-226 (SDRFTFPLFVKPVDAGSSFGCTFVDFFEQLPVAIEHALQHGKSAIVEPALDAPEVF) is an ATP binding site. 3 residues coordinate Mg(2+): Asp-296, Glu-308, and Asn-310.

Belongs to the D-alanine--D-alanine ligase family. Mg(2+) is required as a cofactor. Requires Mn(2+) as cofactor.

The protein localises to the cytoplasm. It catalyses the reaction 2 D-alanine + ATP = D-alanyl-D-alanine + ADP + phosphate + H(+). Its pathway is cell wall biogenesis; peptidoglycan biosynthesis. Cell wall formation. This is D-alanine--D-alanine ligase from Tropheryma whipplei (strain Twist) (Whipple's bacillus).